The chain runs to 399 residues: Elongation factor Tu (399 aa).

One can recognise a tr-type G domain in the interval 10-208 (KPHVNIGTIG…TVDSYIPEPE (199 aa)). Residues 19–26 (GHVDHGKT) form a G1 region. 19–26 (GHVDHGKT) serves as a coordination point for GTP. Residue T26 coordinates Mg(2+). Residues 64 to 68 (GITIN) are G2. A G3 region spans residues 85-88 (DAPG). GTP contacts are provided by residues 85–89 (DAPGH) and 140–143 (NKVD). The G4 stretch occupies residues 140–143 (NKVD). Residues 178–180 (SAL) form a G5 region.

Belongs to the TRAFAC class translation factor GTPase superfamily. Classic translation factor GTPase family. EF-Tu/EF-1A subfamily. As to quaternary structure, monomer.

The protein resides in the cytoplasm. It catalyses the reaction GTP + H2O = GDP + phosphate + H(+). Its function is as follows. GTP hydrolase that promotes the GTP-dependent binding of aminoacyl-tRNA to the A-site of ribosomes during protein biosynthesis. In Streptococcus pyogenes serotype M12 (strain MGAS2096), this protein is Elongation factor Tu.